The chain runs to 606 residues: DNA mismatch repair protein MutL (606 aa).

Residues 348 to 378 (QPHAQRPQAPWSAETSPFRPYPPAAGFSERP) are disordered.

The protein belongs to the DNA mismatch repair MutL/HexB family.

Its function is as follows. This protein is involved in the repair of mismatches in DNA. It is required for dam-dependent methyl-directed DNA mismatch repair. May act as a 'molecular matchmaker', a protein that promotes the formation of a stable complex between two or more DNA-binding proteins in an ATP-dependent manner without itself being part of a final effector complex. This Rhizobium etli (strain CIAT 652) protein is DNA mismatch repair protein MutL.